The chain runs to 228 residues: Nucleolar protein 12 (228 aa).

The tract at residues 1 to 22 is disordered; it reads MGKSDRLQQGSKGKGGGKRKHG. Residues 40-103 adopt a coiled-coil conformation; that stretch reads FHKRKLERRR…AITATTECVQ (64 aa). The segment covering 126–145 has biased composition (basic and acidic residues); sequence LLEPAQRDGGDGEERERTEA. The disordered stretch occupies residues 126–228; it reads LLEPAQRDGG…QTGRNERSQD (103 aa). Over residues 158 to 170 the composition is skewed to polar residues; sequence KIQSLTASLNSLV. A compositionally biased stretch (basic residues) spans 171-180; the sequence is KQKKRRKQKR. The segment covering 181–195 has biased composition (basic and acidic residues); it reads RQEAKQRSHQSDRKS. Residues 204–220 show a composition bias toward basic residues; it reads NKQKQGKSTKRQRRRQT.

This sequence belongs to the RRP17 family.

It is found in the nucleus. The protein localises to the nucleolus. Its function is as follows. May bind to rRNA. This chain is Nucleolar protein 12 (nol12), found in Danio rerio (Zebrafish).